The chain runs to 562 residues: NAD-dependent malic enzyme (562 aa).

Tyr101 functions as the Proton donor in the catalytic mechanism. Arg154 contacts NAD(+). Lys172 serves as the catalytic Proton acceptor. Residues Glu243, Asp244, and Asp267 each coordinate a divalent metal cation. 2 residues coordinate NAD(+): Asp267 and Asn415.

It belongs to the malic enzymes family. As to quaternary structure, homotetramer. The cofactor is Mg(2+). Mn(2+) is required as a cofactor.

It catalyses the reaction (S)-malate + NAD(+) = pyruvate + CO2 + NADH. It carries out the reaction oxaloacetate + H(+) = pyruvate + CO2. The polypeptide is NAD-dependent malic enzyme (Shewanella baltica (strain OS223)).